Reading from the N-terminus, the 692-residue chain is A-type ATP synthase subunit I (692 aa).

The next 7 membrane-spanning stretches (helical) occupy residues 389 to 409 (GIML…LFIW), 422 to 442 (LGYI…ITGG), 494 to 514 (ILVF…FVGF), 531 to 551 (GVWI…FAGA), 553 to 573 (TMIA…ASMY), 602 to 622 (ARLL…NIMA), and 624 to 644 (LVGE…LLVG).

The protein belongs to the V-ATPase 116 kDa subunit family. As to quaternary structure, the A-type ATPase is composed of subunits A(3), B(3), C, D, E(1 or 2), F, H(2), I and K(x).

The protein resides in the cell membrane. In terms of biological role, component of the A-type ATP synthase that produces ATP from ADP in the presence of a proton gradient across the membrane. This chain is A-type ATP synthase subunit I, found in Methanocaldococcus jannaschii (strain ATCC 43067 / DSM 2661 / JAL-1 / JCM 10045 / NBRC 100440) (Methanococcus jannaschii).